The primary structure comprises 76 residues: Putative snRNP Sm-like protein (76 aa).

Positions 4 to 76 (RPLDVIHKSL…VLALSPVELE (73 aa)) constitute a Sm domain.

The protein belongs to the snRNP Sm proteins family.

The protein is Putative snRNP Sm-like protein of Thermococcus kodakarensis (strain ATCC BAA-918 / JCM 12380 / KOD1) (Pyrococcus kodakaraensis (strain KOD1)).